The sequence spans 189 residues: Calcyphosin (189 aa).

EF-hand domains lie at 21 to 56, 57 to 92, 93 to 128, and 136 to 172; these read SGIQ…LGLV, LDTA…PMSQ, AREA…RTHP, and TEEQ…VSAS. 14 residues coordinate Ca(2+): Asp-34, Asp-36, Ser-38, Ser-40, Glu-45, Asp-70, Asp-72, Ser-74, Thr-76, Glu-81, Asp-106, Ser-108, Asp-110, and Asp-117. Phosphoserine; by PKA is present on Ser-40.

In terms of assembly, monomer. Does not form oligomers in the presence of calcium.

It is found in the cytoplasm. Calcium-binding protein. May play a role in cellular signaling events (Potential). The sequence is that of Calcyphosin (CAPS) from Bos taurus (Bovine).